Reading from the N-terminus, the 1370-residue chain is MKSGSGGGSPTSLWGLVFLSAALSLWPTSGEICGPGIDIRNDYQQLKRLENCTVIEGFLHILLISKAEDYRSYRFPKLTVITEYLLLFRVAGLESLGDLFPNLTVIRGWKLFYNYALVIFEMTNLKDIGLYNLRNITRGAIRIEKNADLCYLSTIDWSLILDAVSNNYIVGNKPPKECGDLCPGTLEEKPMCEKTTINNEYNYRCWTTNRCQKMCPSVCGKRACTENNECCHPECLGSCHTPDDNTTCVACRHYYYKGVCVPACPPGTYRFEGWRCVDRDFCANIPNAESSDSDGFVIHDGECMQECPSGFIRNSTQSMYCIPCEGPCPKVCGDEEKKTKTIDSVTSAQMLQGCTILKGNLLINIRRGNNIASELENFMGLIEVVTGYVKIRHSHALVSLSFLKNLRLILGEEQLEGNYSFYVLDNQNLQQLWDWNHRNLTVRSGKMYFAFNPKLCVSEIYRMEEVTGTKGRQSKGDINTRNNGERASCESDVLRFTSTTTWKNRIIITWHRYRPPDYRDLISFTVYYKEAPFKNVTEYDGQDACGSNSWNMVDVDLPPNKEGEPGILLHGLKPWTQYAVYVKAVTLTMVENDHIRGAKSEILYIRTNASVPSIPLDVLSASNSSSQLIVKWNPPTLPNGNLSYYIVRWQRQPQDGYLFRHNYCSKDKIPIRKYADGTIDVEEVTENPKTEVCGGDKGPCCACPKTEAEKQAEKEEAEYRKVFENFLHNSIFVPRPERRRRDVLQVANTTMSSRSRNTTVADTYNITDPEEFETEYPFFESRVDNKERTVISNLRPFTLYRIDIHSCNHEAEKLGCSASNFVFARTMPAEGADDIPGPVTWEPRPENSIFLKWPEPENPNGLILMYEIKYGSQVEDQRECVSRQEYRKYGGAKLNRLNPGNYTARIQATSLSGNGSWTDPVFFYVPAKTTYENFMHLIIALPVAILLIVGGLVIMLYVFHRKRNNSRLGNGVLYASVNPEYFSAADVYVPDEWEVAREKITMNRELGQGSFGMVYEGVAKGVVKDEPETRVAIKTVNEAASMRERIEFLNEASVMKEFNCHHVVRLLGVVSQGQPTLVIMELMTRGDLKSYLRSLRPEVENNLVLIPPSLSKMIQMAGEIADGMAYLNANKFVHRDLAARNCMVAEDFTVKIGDFGMTRDIYETDYYRKGGKGLLPVRWMSPESLKDGVFTTHSDVWSFGVVLWEIATLAEQPYQGLSNEQVLRFVMEGGLLDKPDNCPDMLFELMRMCWQYNPKMRPSFLEIIGSIKDEMEPSFQEVSFYYSEENKPPEPEELEMELELEPENMESVPLDPSASSASLPLPERHSGHKAENGPGVLVLRASFDERQPYAHMNGGRANERALPLPQSSTC.

The N-terminal stretch at 1 to 30 (MKSGSGGGSPTSLWGLVFLSAALSLWPTSG) is a signal peptide. Cysteine 33 and cysteine 52 are joined by a disulfide. Asparagine 51, asparagine 102, and asparagine 135 each carry an N-linked (GlcNAc...) asparagine glycan. 13 cysteine pairs are disulfide-bonded: cysteine 150-cysteine 178, cysteine 182-cysteine 205, cysteine 192-cysteine 211, cysteine 215-cysteine 224, cysteine 219-cysteine 230, cysteine 231-cysteine 239, cysteine 235-cysteine 248, cysteine 251-cysteine 260, cysteine 264-cysteine 276, cysteine 282-cysteine 303, cysteine 307-cysteine 321, cysteine 324-cysteine 328, and cysteine 332-cysteine 354. The N-linked (GlcNAc...) asparagine glycan is linked to asparagine 245. N-linked (GlcNAc...) asparagine glycosylation is present at asparagine 314. 2 N-linked (GlcNAc...) asparagine glycosylation sites follow: asparagine 418 and asparagine 439. A disulfide bond links cysteine 456 and cysteine 489. Fibronectin type-III domains are found at residues 490-610 (ESDV…TNAS) and 611-709 (VPSI…TEAE). N-linked (GlcNAc...) asparagine glycosylation is found at asparagine 535, asparagine 608, asparagine 623, asparagine 641, asparagine 748, asparagine 757, asparagine 765, asparagine 901, and asparagine 914. The Extracellular portion of the chain corresponds to 742-936 (DVLQVANTTM…AKTTYENFMH (195 aa)). Positions 835–928 (IPGPVTWEPR…DPVFFYVPAK (94 aa)) constitute a Fibronectin type-III 3 domain. The helical transmembrane segment at 937–960 (LIIALPVAILLIVGGLVIMLYVFH) threads the bilayer. At 961–1370 (RKRNNSRLGN…ALPLPQSSTC (410 aa)) the chain is on the cytoplasmic side. The IRS1- and SHC1-binding signature appears at 978–981 (NPEY). Tyrosine 981 carries the phosphotyrosine modification. The region spanning 1000–1275 (ITMNRELGQG…SIKDEMEPSF (276 aa)) is the Protein kinase domain. ATP is bound by residues 1006 to 1014 (LGQGSFGMV) and lysine 1034. Catalysis depends on aspartate 1136, which acts as the Proton acceptor. Residues tyrosine 1162, tyrosine 1166, and tyrosine 1167 each carry the phosphotyrosine; by autocatalysis modification. Glycyl lysine isopeptide (Lys-Gly) (interchain with G-Cter in ubiquitin) cross-links involve residues lysine 1169 and lysine 1172. Serine 1279 bears the Phosphoserine; by GSK3-beta mark. Serine 1283 is modified (phosphoserine). Positions 1304–1370 (NMESVPLDPS…ALPLPQSSTC (67 aa)) are disordered. The segment covering 1305 to 1321 (MESVPLDPSASSASLPL) has biased composition (low complexity). The span at 1322–1331 (PERHSGHKAE) shows a compositional bias: basic and acidic residues.

The protein belongs to the protein kinase superfamily. Tyr protein kinase family. Insulin receptor subfamily. As to quaternary structure, tetramer of 2 alpha and 2 beta chains linked by disulfide bonds. The alpha chains contribute to the formation of the ligand-binding domain, while the beta chain carries the kinase domain. Interacts with PIK3R1 and with the PTB/PID domains of IRS1 and SHC1 in vitro when autophosphorylated on tyrosine residues. Forms a hybrid receptor with INSR, the hybrid is a tetramer consisting of 1 alpha chain and 1 beta chain of INSR and 1 alpha chain and 1 beta chain of IGF1R. Interacts with ARRB1 and ARRB2. Interacts with GRB10. Interacts with RACK1. Interacts with SOCS1, SOCS2 and SOCS3. Interacts with 14-3-3 proteins. Interacts with NMD2. Interacts with MAP3K5. Interacts with STAT3. Found in a ternary complex with IGF1 and ITGAV:ITGB3 or ITGA6:ITGB4. Interacts (nascent precursor form) with ZFAND2B. Post-translationally, autophosphorylated on tyrosine residues in response to ligand binding. Autophosphorylation occurs in trans, i.e. one subunit of the dimeric receptor phosphorylates tyrosine residues on the other subunit. Autophosphorylation occurs in a sequential manner; Tyr-1166 is predominantly phosphorylated first, followed by phosphorylation of Tyr-1162 and Tyr-1167. While every single phosphorylation increases kinase activity, all three tyrosine residues in the kinase activation loop (Tyr-1162, Tyr-1166 and Tyr-1167) have to be phosphorylated for optimal activity. Can be autophosphorylated at additional tyrosine residues (in vitro). Autophosphorylated is followed by phosphorylation of juxtamembrane tyrosines and C-terminal serines. May also be phosphorylated at Tyr-1162 and Tyr-1167 by mTORC2. Phosphorylation of Tyr-981 is required for IRS1- and SHC1-binding. Phosphorylation of Ser-1279 by GSK-3beta restrains kinase activity and promotes cell surface expression, it requires a priming phosphorylation at Ser-1283. Dephosphorylated by PTPN1. Polyubiquitinated at Lys-1169 and Lys-1172 through both 'Lys-48' and 'Lys-29' linkages, promoting receptor endocytosis and subsequent degradation by the proteasome. Ubiquitination is facilitated by pre-existing phosphorylation. In terms of processing, sumoylated with SUMO1. Post-translationally, controlled by regulated intramembrane proteolysis (RIP). Undergoes metalloprotease-dependent constitutive ectodomain shedding to produce a membrane-anchored 52 kDa C-Terminal fragment which is further processed by presenilin gamma-secretase to yield an intracellular 50 kDa fragment.

It is found in the cell membrane. It catalyses the reaction L-tyrosyl-[protein] + ATP = O-phospho-L-tyrosyl-[protein] + ADP + H(+). Its activity is regulated as follows. Activated by autophosphorylation at Tyr-1162, Tyr-1166 and Tyr-1167 on the kinase activation loop; phosphorylation at all three tyrosine residues is required for optimal kinase activity. Inhibited by MSC1609119A-1, BMS-754807, PQIP, benzimidazole pyridinone, isoquinolinedione, bis-azaindole, 3-cyanoquinoline, 2,4-bis-arylamino-1,3-pyrimidine, pyrrolopyrimidine, pyrrole-5-carboxaldehyde, picropodophyllin (PPP), tyrphostin derivatives. While most inhibitors bind to the ATP binding pocket, MSC1609119A-1 functions as allosteric inhibitor and binds close to the DFG motif and the activation loop. Dephosphorylated by PTPN1. Functionally, receptor tyrosine kinase which mediates actions of insulin-like growth factor 1 (IGF1). Binds IGF1 with high affinity and IGF2 and insulin (INS) with a lower affinity. The activated IGF1R is involved in cell growth and survival control. IGF1R is crucial for tumor transformation and survival of malignant cell. Ligand binding activates the receptor kinase, leading to receptor autophosphorylation, and tyrosines phosphorylation of multiple substrates, that function as signaling adapter proteins including, the insulin-receptor substrates (IRS1/2), Shc and 14-3-3 proteins. Phosphorylation of IRSs proteins lead to the activation of two main signaling pathways: the PI3K-AKT/PKB pathway and the Ras-MAPK pathway. The result of activating the MAPK pathway is increased cellular proliferation, whereas activating the PI3K pathway inhibits apoptosis and stimulates protein synthesis. Phosphorylated IRS1 can activate the 85 kDa regulatory subunit of PI3K (PIK3R1), leading to activation of several downstream substrates, including protein AKT/PKB. AKT phosphorylation, in turn, enhances protein synthesis through mTOR activation and triggers the antiapoptotic effects of IGFIR through phosphorylation and inactivation of BAD. In parallel to PI3K-driven signaling, recruitment of Grb2/SOS by phosphorylated IRS1 or Shc leads to recruitment of Ras and activation of the ras-MAPK pathway. In addition to these two main signaling pathways IGF1R signals also through the Janus kinase/signal transducer and activator of transcription pathway (JAK/STAT). Phosphorylation of JAK proteins can lead to phosphorylation/activation of signal transducers and activators of transcription (STAT) proteins. In particular activation of STAT3, may be essential for the transforming activity of IGF1R. The JAK/STAT pathway activates gene transcription and may be responsible for the transforming activity. JNK kinases can also be activated by the IGF1R. IGF1 exerts inhibiting activities on JNK activation via phosphorylation and inhibition of MAP3K5/ASK1, which is able to directly associate with the IGF1R. When present in a hybrid receptor with INSR, binds IGF1. In Rattus norvegicus (Rat), this protein is Insulin-like growth factor 1 receptor (Igf1r).